The primary structure comprises 349 residues: Isopentenyl-diphosphate delta-isomerase (349 aa).

6 to 7 lines the substrate pocket; the sequence is RK. FMN contacts are provided by residues 62–64, serine 93, and asparagine 122; that span reads AMT. Glutamine 152 contributes to the substrate binding site. Mg(2+) is bound at residue glutamate 153. Residues lysine 184, threonine 214, 258–259, and 280–281 each bind FMN; these read GG and AG.

This sequence belongs to the IPP isomerase type 2 family. Homooctamer. Dimer of tetramers. Requires FMN as cofactor. The cofactor is NADPH. It depends on Mg(2+) as a cofactor.

The protein resides in the cytoplasm. The catalysed reaction is isopentenyl diphosphate = dimethylallyl diphosphate. In terms of biological role, involved in the biosynthesis of isoprenoids. Catalyzes the 1,3-allylic rearrangement of the homoallylic substrate isopentenyl (IPP) to its allylic isomer, dimethylallyl diphosphate (DMAPP). The polypeptide is Isopentenyl-diphosphate delta-isomerase (Bacillus cereus (strain AH820)).